The sequence spans 250 residues: 2,3-bisphosphoglycerate-dependent phosphoglycerate mutase (250 aa).

Substrate contacts are provided by residues 8 to 15, 21 to 22, R60, 87 to 90, K98, 114 to 115, and 183 to 184; these read RHGESQWN, TG, ERHY, RR, and GN. Residue H9 is the Tele-phosphohistidine intermediate of the active site. E87 functions as the Proton donor/acceptor in the catalytic mechanism.

Belongs to the phosphoglycerate mutase family. BPG-dependent PGAM subfamily. As to quaternary structure, homodimer.

It carries out the reaction (2R)-2-phosphoglycerate = (2R)-3-phosphoglycerate. It functions in the pathway carbohydrate degradation; glycolysis; pyruvate from D-glyceraldehyde 3-phosphate: step 3/5. In terms of biological role, catalyzes the interconversion of 2-phosphoglycerate and 3-phosphoglycerate. This chain is 2,3-bisphosphoglycerate-dependent phosphoglycerate mutase, found in Bordetella petrii (strain ATCC BAA-461 / DSM 12804 / CCUG 43448).